The sequence spans 489 residues: Ecdysteroid UDP-glucosyltransferase (489 aa).

A signal peptide spans 1–17; the sequence is MVFLIIALTLLATGARA.

The protein belongs to the UDP-glycosyltransferase family.

Catalyzes the transfer of glucose from UDP-glucose to ecdysteroids which are insect molting hormones. Expression of egt interferes with normal insect development and block molting. The chain is Ecdysteroid UDP-glucosyltransferase (EGT) from Orgyia pseudotsugata (Douglas-fir tussock moth).